We begin with the raw amino-acid sequence, 126 residues long: Non-specific lipid-transfer protein 15 (126 aa).

The first 22 residues, 1 to 22 (MSKSIFVVCITLLVVLSPTLNA), serve as a signal peptide directing secretion. 4 disulfide bridges follow: C34-C80, C45-C57, C58-C100, and C78-C114.

Belongs to the plant LTP family.

In terms of biological role, plant non-specific lipid-transfer proteins transfer phospholipids as well as galactolipids across membranes. May play a role in wax or cutin deposition in the cell walls of expanding epidermal cells and certain secretory tissues. The chain is Non-specific lipid-transfer protein 15 (LTP15) from Arabidopsis thaliana (Mouse-ear cress).